We begin with the raw amino-acid sequence, 60 residues long: Cytotoxin 4 (60 aa).

Intrachain disulfides connect Cys3–Cys21, Cys14–Cys38, Cys42–Cys53, and Cys54–Cys59.

The protein belongs to the three-finger toxin family. Short-chain subfamily. Type IA cytotoxin sub-subfamily. As to quaternary structure, monomer in solution; Homodimer and oligomer in the presence of negatively charged lipids forming a pore with a size ranging between 20 and 30 Angstroms. Expressed by the venom gland.

It localises to the secreted. Its subcellular location is the target cell membrane. Its function is as follows. Shows cytolytic activity on many different cells by forming pore in lipid membranes. In vivo, increases heart rate or kills the animal by cardiac arrest. In addition, it binds to heparin with high affinity, interacts with Kv channel-interacting protein 1 (KCNIP1) in a calcium-independent manner, and binds to integrin alpha-V/beta-3 (ITGAV/ITGB3) with moderate affinity. The sequence is that of Cytotoxin 4 from Naja annulifera (Banded Egyptian cobra).